The chain runs to 549 residues: Sphingosine-1-phosphate transporter SPNS2 (549 aa).

2 disordered regions span residues 14-36 (AEEE…GAGG) and 78-97 (PGCA…PASL). 11 consecutive transmembrane segments (helical) span residues 141-161 (GLLQ…FGYL), 169-189 (VILS…SFIP), 202-222 (LVGI…GDLF), 229-249 (LMLS…YITG), 261-281 (WALR…LILV), 320-340 (LATS…PLYL), 364-384 (LIFG…GAGA), 398-418 (LVCA…FVAA), 422-442 (IVGA…NWAI), 466-486 (TSHL…SDLI), and 507-527 (LCPF…LFFL).

This sequence belongs to the major facilitator superfamily. Spinster (TC 2.A.1.49) family. As to expression, expression is high in the lungs and liver, low in the lymph nodes, spleen and bone marrow, and very low but detectable in the thymus. Not expressed in red blood cells. Also expressed in the inner ear: expressed in the cochlea, both in the lateral wall and organ of Corti.

The protein resides in the cell membrane. It is found in the endosome membrane. The enzyme catalyses sphing-4-enine 1-phosphate(in) = sphing-4-enine 1-phosphate(out). It catalyses the reaction sphinganine 1-phosphate(in) = sphinganine 1-phosphate(out). Its function is as follows. Lipid transporter that specifically mediates export of sphingosine-1-phosphate (sphing-4-enine 1-phosphate, S1P) and sphinganine-1-phosphate in the lymph, thereby playing a role in lymphocyte trafficking. S1P is a bioactive signaling molecule that regulates many physiological processes important for the development and for the immune system. Regulates levels of S1P and the S1P gradient that exists between the high circulating concentrations of S1P and low tissue levels that control lymphocyte trafficking. Required for the egress of T-cells from lymph nodes during an immune response by mediating S1P secretion, which generates a gradient that enables activated T-cells to access lymph. Also required for the egress of immature B-cells from the bone marrow. In contrast, it does not mediate S1P release from red blood cells. Involved in auditory function: S1P release in the inner ear is required for maintenance of the endocochlear potential in the cochlea. In addition to export, also able to mediate S1P import. The protein is Sphingosine-1-phosphate transporter SPNS2 of Mus musculus (Mouse).